We begin with the raw amino-acid sequence, 357 residues long: 4-hydroxy-3-methylbut-2-en-1-yl diphosphate synthase (flavodoxin) (357 aa).

Positions 264, 267, 299, and 306 each coordinate [4Fe-4S] cluster.

It belongs to the IspG family. It depends on [4Fe-4S] cluster as a cofactor.

It carries out the reaction (2E)-4-hydroxy-3-methylbut-2-enyl diphosphate + oxidized [flavodoxin] + H2O + 2 H(+) = 2-C-methyl-D-erythritol 2,4-cyclic diphosphate + reduced [flavodoxin]. It participates in isoprenoid biosynthesis; isopentenyl diphosphate biosynthesis via DXP pathway; isopentenyl diphosphate from 1-deoxy-D-xylulose 5-phosphate: step 5/6. Converts 2C-methyl-D-erythritol 2,4-cyclodiphosphate (ME-2,4cPP) into 1-hydroxy-2-methyl-2-(E)-butenyl 4-diphosphate. This Campylobacter jejuni subsp. jejuni serotype O:2 (strain ATCC 700819 / NCTC 11168) protein is 4-hydroxy-3-methylbut-2-en-1-yl diphosphate synthase (flavodoxin).